The chain runs to 91 residues: Acylphosphatase (91 aa).

Residues Arg-5–Tyr-91 form the Acylphosphatase-like domain. Active-site residues include Arg-20 and Asn-38.

Belongs to the acylphosphatase family.

The enzyme catalyses an acyl phosphate + H2O = a carboxylate + phosphate + H(+). The chain is Acylphosphatase (acyP) from Metallosphaera sedula (strain ATCC 51363 / DSM 5348 / JCM 9185 / NBRC 15509 / TH2).